We begin with the raw amino-acid sequence, 270 residues long: Myelin protein zero-like protein 1 (270 aa).

An N-terminal signal peptide occupies residues 1–35 (MAEAVGAVALIAAPARRRWLWSVLAAMLGLLTARI). An Ig-like V-type domain is found at 36 to 151 (SALEVHTPKE…DIVVRPGHIR (116 aa)). At 36-162 (SALEVHTPKE…HVVEIDNLLV (127 aa)) the chain is on the extracellular side. N-linked (GlcNAc...) asparagine glycosylation is found at N50 and N130. C58 and C135 form a disulfide bridge. Residues 163-183 (FLVWVVVGTVTAVVLGLTLLI) form a helical membrane-spanning segment. Topologically, residues 184-270 (SLVLVVLYRR…SVVYADIRKD (87 aa)) are cytoplasmic. The tract at residues 201–257 (TGCSTSERLSPVKQAPRKCPSDTEGLVKSPPSAGSHQGPVIYAQLDHSGGHHSGKIN) is disordered. Phosphoserine occurs at positions 204, 206, 210, and 221. Residues 240-245 (VIYAQL) carry the ITIM motif 1 motif. Y242 bears the Phosphotyrosine mark. S261 is modified (phosphoserine). The ITIM motif 2 signature appears at 262–267 (VVYADI). Y264 bears the Phosphotyrosine mark.

This sequence belongs to the myelin P0 protein family. As to quaternary structure, interacts with phosphorylated PTPN11/SHP-2. Post-translationally, phosphorylated on tyrosine residues upon stimulation with pervanadate and concanavalin-A (ConA). Phosphorylation at Tyr-242 and Tyr-264 is required for interaction with PTPN11/SHP-2. Dephosphorylated by PTPN11/SHP-2 (in vitro).

It localises to the membrane. Its function is as follows. Cell surface receptor, which is involved in signal transduction processes. Recruits PTPN11/SHP-2 to the cell membrane and is a putative substrate of PTPN11/SHP-2. Is a major receptor for concanavalin-A (ConA) and is involved in cellular signaling induced by ConA, which probably includes Src family tyrosine-protein kinases. Isoform 2 seems to have a dominant negative role; it blocks tyrosine phosphorylation of MPZL1 induced by ConA. Isoform 1, but not isoform 2, may be involved in regulation of integrin-mediated cell motility. In Mus musculus (Mouse), this protein is Myelin protein zero-like protein 1 (Mpzl1).